Consider the following 365-residue polypeptide: tRNA-specific 2-thiouridylase MnmA (365 aa).

Residues A14 to S21 and L40 each bind ATP. Residue C108 is the Nucleophile of the active site. C108 and C204 are disulfide-bonded. G132 serves as a coordination point for ATP. The interval K154 to Q156 is interaction with tRNA. The active-site Cysteine persulfide intermediate is C204.

This sequence belongs to the MnmA/TRMU family.

It localises to the cytoplasm. The enzyme catalyses S-sulfanyl-L-cysteinyl-[protein] + uridine(34) in tRNA + AH2 + ATP = 2-thiouridine(34) in tRNA + L-cysteinyl-[protein] + A + AMP + diphosphate + H(+). Its function is as follows. Catalyzes the 2-thiolation of uridine at the wobble position (U34) of tRNA, leading to the formation of s(2)U34. This Rickettsia massiliae (strain Mtu5) protein is tRNA-specific 2-thiouridylase MnmA.